The primary structure comprises 1325 residues: NHS-like protein 3 (1325 aa).

Positions 53 to 85 form a coiled coil; sequence LEDLHTEAQEGLKILQQEEEDTSSKERNESLEN. 10 disordered regions span residues 68–92, 111–131, 291–348, 368–570, 595–614, 829–891, 935–981, 1084–1138, 1243–1272, and 1293–1313; these read QQEE…SGHS, QGST…KRRS, CSAS…KGKC, MSVS…AKTS, QTNT…TTVK, EVNG…MEES, LLST…VSEF, VGED…SSAV, GTKK…ENAT, and SDQV…EQAS. A compositionally biased stretch (low complexity) spans 296–334; it reads ASKGSMASASPSSSRSGSGTNQAPPTTSPSRSNSQSSET. The span at 335-344 shows a compositional bias: polar residues; the sequence is IVSNSSTISS. The segment covering 369–378 has biased composition (low complexity); sequence SVSSSSSWKS. Residues 400 to 412 show a composition bias toward polar residues; it reads VRNSHSFSRSLSV. Over residues 428-447 the composition is skewed to basic and acidic residues; it reads LHHENMQRQREQGDIQDPKD. Positions 450 to 460 are enriched in polar residues; it reads PNNNEQTNRDI. Over residues 515-524 the composition is skewed to basic and acidic residues; that stretch reads KTRECGENFD. Over residues 528–541 the composition is skewed to low complexity; it reads SPSSGYSSQSGTPT. Residues 834 to 850 are compositionally biased toward pro residues; that stretch reads SPPPSPPPEHHPPPPPI. 2 stretches are compositionally biased toward polar residues: residues 935-948 and 1088-1100; these read LLST…SSPE and QVNN…TEPT. Positions 1124-1138 are enriched in low complexity; that stretch reads KSNSPAKSSSASSAV. The span at 1302-1311 shows a compositional bias: polar residues; sequence RAQSLGNQEQ.

Functionally, able to directly activate the TNF-NFkappaB signaling pathway. The protein is NHS-like protein 3 (nhsl3) of Danio rerio (Zebrafish).